Here is a 1184-residue protein sequence, read N- to C-terminus: Probable phospholipid-transporting ATPase 12 (1184 aa).

Residues methionine 1 to leucine 75 lie on the Cytoplasmic side of the membrane. The helical transmembrane segment at proline 76–leucine 97 threads the bilayer. Residues serine 98–proline 101 are Extracellular-facing. Residues leucine 102–lysine 124 traverse the membrane as a helical segment. Residues glutamate 125–isoleucine 306 lie on the Cytoplasmic side of the membrane. The helical transmembrane segment at isoleucine 307–tryptophan 328 threads the bilayer. Topologically, residues threonine 329 to histidine 364 are extracellular. Residues phenylalanine 365 to valine 382 traverse the membrane as a helical segment. Topologically, residues serine 383–serine 921 are cytoplasmic. Aspartate 430 serves as the catalytic 4-aspartylphosphate intermediate. Mg(2+) contacts are provided by aspartate 866 and aspartate 870. The helical transmembrane segment at lysine 922 to tyrosine 941 threads the bilayer. At glutamate 942–aspartate 955 the chain is on the extracellular side. A helical transmembrane segment spans residues tryptophan 956–isoleucine 975. Over phenylalanine 976–arginine 1005 the chain is Cytoplasmic. A helical membrane pass occupies residues isoleucine 1006–leucine 1028. The Extracellular segment spans residues glutamate 1029–glycine 1041. A helical membrane pass occupies residues arginine 1042–threonine 1064. The Cytoplasmic portion of the chain corresponds to isoleucine 1065–leucine 1070. A helical transmembrane segment spans residues isoleucine 1071–glycine 1091. The Extracellular segment spans residues serine 1092–alanine 1108. A helical membrane pass occupies residues leucine 1109 to phenylalanine 1133. Residues serine 1134–serine 1184 are Cytoplasmic-facing.

It belongs to the cation transport ATPase (P-type) (TC 3.A.3) family. Type IV subfamily.

The protein resides in the membrane. It catalyses the reaction ATP + H2O + phospholipidSide 1 = ADP + phosphate + phospholipidSide 2.. Functionally, involved in transport of phospholipids. The sequence is that of Probable phospholipid-transporting ATPase 12 from Arabidopsis thaliana (Mouse-ear cress).